The chain runs to 67 residues: DNA-directed RNA polymerase subunit omega (67 aa).

The protein belongs to the RNA polymerase subunit omega family. As to quaternary structure, the RNAP catalytic core consists of 2 alpha, 1 beta, 1 beta' and 1 omega subunit. When a sigma factor is associated with the core the holoenzyme is formed, which can initiate transcription.

It carries out the reaction RNA(n) + a ribonucleoside 5'-triphosphate = RNA(n+1) + diphosphate. Functionally, promotes RNA polymerase assembly. Latches the N- and C-terminal regions of the beta' subunit thereby facilitating its interaction with the beta and alpha subunits. This Listeria monocytogenes serotype 4b (strain F2365) protein is DNA-directed RNA polymerase subunit omega.